A 356-amino-acid chain; its full sequence is tRNA N6-adenosine threonylcarbamoyltransferase (356 aa).

Residues histidine 115 and histidine 119 each contribute to the Fe cation site. Substrate is bound by residues 139–143 (LVSGG), aspartate 173, glycine 186, aspartate 190, and asparagine 291. Position 319 (aspartate 319) interacts with Fe cation.

This sequence belongs to the KAE1 / TsaD family. Fe(2+) is required as a cofactor.

It localises to the cytoplasm. The enzyme catalyses L-threonylcarbamoyladenylate + adenosine(37) in tRNA = N(6)-L-threonylcarbamoyladenosine(37) in tRNA + AMP + H(+). Its function is as follows. Required for the formation of a threonylcarbamoyl group on adenosine at position 37 (t(6)A37) in tRNAs that read codons beginning with adenine. Is involved in the transfer of the threonylcarbamoyl moiety of threonylcarbamoyl-AMP (TC-AMP) to the N6 group of A37, together with TsaE and TsaB. TsaD likely plays a direct catalytic role in this reaction. This is tRNA N6-adenosine threonylcarbamoyltransferase from Arthrobacter sp. (strain FB24).